We begin with the raw amino-acid sequence, 301 residues long: Glycine--tRNA ligase alpha subunit (301 aa).

Belongs to the class-II aminoacyl-tRNA synthetase family. Tetramer of two alpha and two beta subunits.

It is found in the cytoplasm. It catalyses the reaction tRNA(Gly) + glycine + ATP = glycyl-tRNA(Gly) + AMP + diphosphate. This chain is Glycine--tRNA ligase alpha subunit, found in Shewanella halifaxensis (strain HAW-EB4).